A 190-amino-acid chain; its full sequence is Shikimate kinase (190 aa).

26 to 31 (GSGKST) is an ATP binding site. Mg(2+) is bound at residue serine 30. Residues aspartate 48, arginine 72, and glycine 94 each coordinate substrate. Arginine 133 contributes to the ATP binding site. Arginine 152 lines the substrate pocket.

Belongs to the shikimate kinase family. Monomer. Requires Mg(2+) as cofactor.

Its subcellular location is the cytoplasm. The catalysed reaction is shikimate + ATP = 3-phosphoshikimate + ADP + H(+). It participates in metabolic intermediate biosynthesis; chorismate biosynthesis; chorismate from D-erythrose 4-phosphate and phosphoenolpyruvate: step 5/7. Its function is as follows. Catalyzes the specific phosphorylation of the 3-hydroxyl group of shikimic acid using ATP as a cosubstrate. In Prochlorococcus marinus (strain SARG / CCMP1375 / SS120), this protein is Shikimate kinase.